We begin with the raw amino-acid sequence, 130 residues long: Organ-specific protein P4 (130 aa).

A run of 2 repeats spans residues 60–85 and 86–111. The tract at residues 60 to 111 is 2 X 26 AA tandem repeats; the sequence is HAKENKGAIGEFEPCPNASAYGDNEIHANENKGAIGEFETRPNGSAYGDNEI. Residues 79 to 130 are disordered; that stretch reads AYGDNEIHANENKGAIGEFETRPNGSAYGDNEIGAEFTDDFEPRPSMTKYNA.

To organ specific protein S2. In terms of tissue distribution, expressed in pods.

In Pisum sativum (Garden pea), this protein is Organ-specific protein P4.